The sequence spans 1116 residues: Disease resistance protein RGA5 (1116 aa).

The tract at residues 1-177 (MDAPASFSLG…HHGVSANLVG (177 aa)) is structured coiled coil (CC) domain. The 285-residue stretch at 182 to 466 (KTKLNRWLSD…WSAEGFVSAN (285 aa)) folds into the NB-ARC domain. 9 LRR repeats span residues 608-631 (LFQL…ISGL), 633-653 (YLET…LVHL), 654-675 (PNLL…GCMR), 677-701 (LRTL…ELTN), 732-755 (LSNL…DISS), 786-808 (LHKL…DNLT), 810-830 (LPSL…RFIF), 835-857 (LPVL…AGAM), and 858-882 (PNLQ…LFGI). The interval 935–971 (EEESHPLEKQHHKREKGSSAGHGVLEKESVEDSEKNT) is disordered. The span at 958–971 (VLEKESVEDSEKNT) shows a compositional bias: basic and acidic residues. The 70-residue stretch at 997 to 1066 (RTKIVVKVHM…KCGLAELLMV (70 aa)) folds into the HMA domain. The segment at 1000–1070 (IVVKVHMPCG…AELLMVELVE (71 aa)) is HMA-like domain.

Belongs to the disease resistance NB-LRR family. As to quaternary structure, forms homodimer or heterodimer with RGA4 through its coiled coil (CC) domain. Interacts with AVR1-Pia and AVR-CO39 through its C-terminal part containing the HMA-like domain. As to expression, expressed in leaves.

It is found in the cytoplasm. Its function is as follows. Disease resistance (R) protein that recognizes the AVR-Pia and AVR1-CO39 effector avirulence proteins from M.oryzae. Resistance proteins guard the plant against pathogens that contain an appropriate avirulence protein via an indirect interaction with this avirulence protein. That triggers a defense system including the hypersensitive response, which restricts the pathogen growth. Contribution of RGA4 is required to recognize the effector avirulence proteins AVR-Pia and AVR1-CO39 from M.oryzae. Acts as a repressor of the RGA4-mediated cell death activation. Upon infection, recognition and binding of the AVR effectors relieve the RGA5-mediated repression and triggers the hypersensitive response. Immune response triggered by the RGA4-RGA5 -mediated recognition of AVR1-CO39 confers resistance to X.oryzae pathovars. The protein is Disease resistance protein RGA5 of Oryza sativa subsp. japonica (Rice).